The sequence spans 318 residues: uncharacterized protein (318 aa).

Residues 19–63 (VPPDARHHEPRPGMTDHPDTGNGIGLTGRPPRAIPDPAPRSSHGP) form a disordered region. Residues 21 to 37 (PDARHHEPRPGMTDHPD) are compositionally biased toward basic and acidic residues. 72–79 (QKGGVGKT) is an ATP binding site.

It belongs to the ParA family.

Functionally, may play a role in septum formation. This is an uncharacterized protein from Mycobacterium tuberculosis (strain CDC 1551 / Oshkosh).